Here is a 963-residue protein sequence, read N- to C-terminus: Putative RNA Helicase B962L (963 aa).

One can recognise a Helicase ATP-binding domain in the interval 43-229 (IPTSLADRVL…FGIGKENIIL (187 aa)). 56–63 (SRTGSGKS) lines the ATP pocket. Positions 167–170 (DEAH) match the DEAH box motif. One can recognise a Helicase C-terminal domain in the interval 253-459 (ACETALTIHK…TIKKNKEGVF (207 aa)). A helical transmembrane segment spans residues 521–541 (GYFWQAAISDIAIILAVVSVV).

This sequence belongs to the DEAD box helicase family. DEAH subfamily.

Its subcellular location is the host membrane. The protein resides in the virion. The catalysed reaction is ATP + H2O = ADP + phosphate + H(+). The sequence is that of Putative RNA Helicase B962L from African swine fever virus (isolate Tick/Malawi/Lil 20-1/1983) (ASFV).